Reading from the N-terminus, the 371-residue chain is Peptide chain release factor 2 (371 aa).

Glutamine 253 carries the post-translational modification N5-methylglutamine.

Belongs to the prokaryotic/mitochondrial release factor family. Post-translationally, methylated by PrmC. Methylation increases the termination efficiency of RF2.

It localises to the cytoplasm. Peptide chain release factor 2 directs the termination of translation in response to the peptide chain termination codons UGA and UAA. This chain is Peptide chain release factor 2, found in Mycobacterium sp. (strain JLS).